Reading from the N-terminus, the 945-residue chain is 26S proteasome regulatory subunit RPN2 (945 aa).

At Ser2 the chain carries N-acetylserine. PC repeat units follow at residues 366 to 399 (TATA…SSRF), 403 to 440 (GSLY…EDVD), 445 to 479 (GASL…TSGE), 480 to 514 (AAAL…GNIT), 516 to 549 (GLAV…LLRY), 550 to 585 (GGAF…DVRR), 586 to 618 (AAVI…AHVR), 620 to 654 (GTAF…FVRQ), 655 to 692 (AAMI…KHQE), and 698 to 734 (GACV…VGLV). Thr801 is subject to Phosphothreonine. Positions 810–819 (AKARAKKTKK) are enriched in basic residues. The tract at residues 810–851 (AKARAKKTKKEKGPNEEEKKKEHEEKEKERETNKKGIKETKE) is disordered. Residues 820–851 (EKGPNEEEKKKEHEEKEKERETNKKGIKETKE) are compositionally biased toward basic and acidic residues. Residue Thr932 is modified to Phosphothreonine.

It belongs to the proteasome subunit S1 family. As to quaternary structure, interacts with UBR1. Post-translationally, N-acetylated by NAT1.

Acts as a regulatory subunit of the 26S proteasome which is involved in the ATP-dependent degradation of ubiquitinated proteins. This chain is 26S proteasome regulatory subunit RPN2 (RPN2), found in Saccharomyces cerevisiae (strain ATCC 204508 / S288c) (Baker's yeast).